Reading from the N-terminus, the 1487-residue chain is MVQWLAMLQLLWLQQLLLLGIHQGIAQDLTHIQEPSLEWRDKGIFIIQSESLKTCIQAGKSVLTLENCKQPNEHMLWKWVSDDHLFNVGGSGCLGLNISALEQPLKLYECDSTLISLRWHCDRKMIEGPLQYKVQVKSDNTVVARKQIHRWIAYTSSGGDICEHPSRDLYTLKGNAHGMPCVFPFQFKGHWHHDCIREGQKEHLLWCATTSRYEEDEKWGFCPDPTSMKVFCDATWQRNGSSRICYQFNLLSSLSWNQAHSSCLMQGGALLSIADEDEEDFIRKHLSKVVKEVWIGLNQLDEKAGWQWSDGTPLSYLNWSQEITPGPFVEHHCGTLEVVSAAWRSRDCESTLPYICKRDLNHTAQGILEKDSWKYHATHCDPDWTPFNRKCYKLKKDRKSWLGALHSCQSNDSVLMDVASLAEVEFLVSLLRDENASETWIGLSSNKIPVSFEWSSGSSVIFTNWYPLEPRILPNRRQLCVSAEESDGRWKVKDCKERLFYICKKAGQVPADEQSGCPAGWERHGRFCYKIDTVLRSFEEASSGYYCSPALLTITSRFEQAFITSLISSVAEKDSYFWIALQDQNNTGEYTWKTVGQREPVQYTYWNTRQPSNRGGCVVVRGGSSLGRWEVKDCSDFKAMSLCKTPVKIWEKTELEERWPFHPCYMDWESATGLASCFKVFHSEKVLMKRSWREAEAFCEEFGAHLASFAHIEEENFVNELLHSKFNWTQERQFWIGFNRRNPLNAGSWAWSDGSPVVSSFLDNAYFEEDAKNCAVYKANKTLLPSNCASKHEWICRIPRDVRPKFPDWYQYDAPWLFYQNAEYLFHTHPAEWATFEFVCGWLRSDFLTIYSAQEQEFIHSKIKGLTKYGVKWWIGLEEGGARDQIQWSNGSPVIFQNWDKGREERVDSQRKRCVFISSITGLWGTENCSVPLPSICKRVKIWVIEKEKPPTQPGTCPKGWLYFNYKCFLVTIPKDPRELKTWTGAQEFCVAKGGTLVSIKSELEQAFITMNLFGQTTNVWIGLQSTNHEKWVNGKPLVYSNWSPSDIINIPSYNTTEFQKHIPLCALMSSNPNFHFTGKWYFDDCGKEGYGFVCEKMQDTLEHHVNVSDTSAIPSTLEYGNRTYKIIRGNMTWYAAGKSCRMHRAELASIPDAFHQAFLTVLLSRLGHTHWIGLSTTDNGQTFDWSDGTKSPFTYWKDEESAFLGDCAFADTNGRWHSTACESFLQGAICHVVTETKAFEHPGLCSETSVPWIKFKGNCYSFSTVLDSRSFEDAHEFCKSEGSNLLAIRDAAENSFLLEELLAFGSSVQMVWLNAQFDNNNKTLRWFDGTPTEQSNWGLRKPDMDHLKPHPCVVLRIPEGIWHFTPCEDKKGFICKMEAGIPAVTAQPEKGLSHSIVPVTVTLTLIIALGIFMLCFWIYKQKSDIFQRLTGSRGSYYPTLNFSTAHLEENILISDLEKNTNDEEVRDAPATESKRGHKGRPICISP.

Positions 1–26 (MVQWLAMLQLLWLQQLLLLGIHQGIA) are cleaved as a signal peptide. Residues 27-1396 (QDLTHIQEPS…AQPEKGLSHS (1370 aa)) lie on the Extracellular side of the membrane. One can recognise a Ricin B-type lectin domain in the interval 42-165 (KGIFIIQSES…SSGGDICEHP (124 aa)). Intrachain disulfides connect cysteine 55-cysteine 68, cysteine 93-cysteine 110, cysteine 181-cysteine 207, and cysteine 195-cysteine 222. Asparagine 97 is a glycosylation site (N-linked (GlcNAc...) asparagine). Residues 176 to 224 (AHGMPCVFPFQFKGHWHHDCIREGQKEHLLWCATTSRYEEDEKWGFCPD) form the Fibronectin type-II domain. An N-linked (GlcNAc...) asparagine glycan is attached at asparagine 239. C-type lectin domains lie at 241–357 (SSRI…YICK), 387–504 (FNRK…YICK), 524–643 (HGRF…MSLC), 673–797 (GLAS…WICR), 819–938 (YQNA…SICK), and 964–1095 (FNYK…GFVC). 10 disulfide bridges follow: cysteine 263-cysteine 356, cysteine 333-cysteine 348, cysteine 408-cysteine 503, cysteine 480-cysteine 495, cysteine 617-cysteine 634, cysteine 699-cysteine 796, cysteine 774-cysteine 788, cysteine 840-cysteine 937, cysteine 914-cysteine 929, and cysteine 1066-cysteine 1086. Asparagine 928 is a glycosylation site (N-linked (GlcNAc...) asparagine). N-linked (GlcNAc...) asparagine glycans are attached at residues asparagine 1107, asparagine 1122, and asparagine 1131. C-type lectin domains follow at residues 1120–1231 (YGNR…GAIC) and 1256–1377 (FKGN…FICK). 3 disulfide bridges follow: cysteine 1208–cysteine 1222, cysteine 1279–cysteine 1376, and cysteine 1353–cysteine 1368. The helical transmembrane segment at 1397-1417 (IVPVTVTLTLIIALGIFMLCF) threads the bilayer. Topologically, residues 1418–1487 (WIYKQKSDIF…HKGRPICISP (70 aa)) are cytoplasmic. The Endocytosis signal signature appears at 1435-1441 (GSYYPTL). Positions 1463–1475 (DEEVRDAPATESK) are enriched in basic and acidic residues. The disordered stretch occupies residues 1463-1487 (DEEVRDAPATESKRGHKGRPICISP).

Interacts with sPLA2-IB/PLA2G1B; this interaction mediates intracellular signaling as well as clearance of extracellular sPLA2-IB/PLA2G1B via endocytotic pathway. Interacts with sPLA2-X/PLA2G10; this interaction mediates sPLA2-X/PLA2G10 clearance and inactivation. The secretory phospholipase A2 receptor form may be produced by the action of metalloproteinases. It contains all extracellular domains and only lacks transmembrane and cytosolic regions. It is however unclear whether this form is produced by proteolytic cleavage as suggested by some experiments reported by PubMed:11830583, or by alternative splicing. In terms of tissue distribution, widely expressed. Present in type II alveolar epithelial cells and a subset of splenic lymphocytes. Present at the surface of polymorphonuclear neutrophils (at protein level).

It is found in the cell membrane. The protein resides in the secreted. Its function is as follows. Receptor for secretory phospholipase A2 (sPLA2). Acts as a receptor for phospholipases sPLA2-IB/PLA2G1B, sPLA2-X/PLA2G10 and, with lower affinity, sPLA2-IIA/PLA2G2A. Also able to bind to snake PA2-like toxins. Although its precise function remains unclear, binding of sPLA2 to its receptor participates in both positive and negative regulation of sPLA2 functions as well as clearance of sPLA2. Binding of sPLA2-IB/PLA2G1B induces various effects depending on the cell type, such as activation of the mitogen-activated protein kinase (MAPK) cascade to induce cell proliferation, the production of lipid mediators, selective release of arachidonic acid in bone marrow-derived mast cells. In neutrophils, binding of sPLA2-IB/PLA2G1B can activate p38 MAPK to stimulate elastase release and cell adhesion. May be involved in responses in pro-inflammatory cytokine productions during endotoxic shock. Also has endocytic properties and rapidly internalizes sPLA2 ligands, which is particularly important for the clearance of extracellular sPLA2s to protect their potent enzymatic activities. The soluble secretory phospholipase A2 receptor form is circulating and acts as a negative regulator of sPLA2 functions by blocking the biological functions of sPLA2-IB/PLA2G1B and sPLA2-X/PLA2G10. In podocytes, binding of sPLA2-IB/PLA2G1B can regulate podocyte survival and glomerular homeostasis. The protein is Secretory phospholipase A2 receptor (Pla2r1) of Mus musculus (Mouse).